We begin with the raw amino-acid sequence, 337 residues long: Formamidase (337 aa).

The 244-residue stretch at 14–257 (VVIGLVQLQL…DEIITAEVRP (244 aa)) folds into the CN hydrolase domain. E60 (proton acceptor) is an active-site residue. K129 acts as the Proton donor in catalysis. C162 serves as the catalytic Nucleophile.

It belongs to the carbon-nitrogen hydrolase superfamily. Aliphatic amidase family.

The catalysed reaction is formamide + H2O = formate + NH4(+). Is an aliphatic amidase with a restricted substrate specificity, as it only hydrolyzes formamide. This is Formamidase from Bradyrhizobium diazoefficiens (strain JCM 10833 / BCRC 13528 / IAM 13628 / NBRC 14792 / USDA 110).